Reading from the N-terminus, the 1022-residue chain is Protein translocase subunit SecA (1022 aa).

Residues Q143, 161–165, and D661 contribute to the ATP site; that span reads GEGKT. Residues 973–1001 form a disordered region; sequence AGSILSHESDVPSGTAAQQPIKADVKPGR. Zn(2+) is bound by residues C1005, C1007, C1016, and H1017.

It belongs to the SecA family. In terms of assembly, monomer and homodimer. Part of the essential Sec protein translocation apparatus which comprises SecA, SecYEG and auxiliary proteins SecDF. Other proteins may also be involved. Zn(2+) serves as cofactor.

Its subcellular location is the cell inner membrane. It is found in the cytoplasm. It carries out the reaction ATP + H2O + cellular proteinSide 1 = ADP + phosphate + cellular proteinSide 2.. In terms of biological role, part of the Sec protein translocase complex. Interacts with the SecYEG preprotein conducting channel. Has a central role in coupling the hydrolysis of ATP to the transfer of proteins into and across the cell membrane, serving as an ATP-driven molecular motor driving the stepwise translocation of polypeptide chains across the membrane. In Chlorobium phaeobacteroides (strain DSM 266 / SMG 266 / 2430), this protein is Protein translocase subunit SecA.